The following is a 254-amino-acid chain: 3-deoxy-manno-octulosonate cytidylyltransferase (254 aa).

This sequence belongs to the KdsB family.

It localises to the cytoplasm. It catalyses the reaction 3-deoxy-alpha-D-manno-oct-2-ulosonate + CTP = CMP-3-deoxy-beta-D-manno-octulosonate + diphosphate. The protein operates within nucleotide-sugar biosynthesis; CMP-3-deoxy-D-manno-octulosonate biosynthesis; CMP-3-deoxy-D-manno-octulosonate from 3-deoxy-D-manno-octulosonate and CTP: step 1/1. Its pathway is bacterial outer membrane biogenesis; lipopolysaccharide biosynthesis. In terms of biological role, activates KDO (a required 8-carbon sugar) for incorporation into bacterial lipopolysaccharide in Gram-negative bacteria. This chain is 3-deoxy-manno-octulosonate cytidylyltransferase, found in Chlamydia trachomatis serovar A (strain ATCC VR-571B / DSM 19440 / HAR-13).